The primary structure comprises 118 residues: Large ribosomal subunit protein uL18 (118 aa).

The disordered stretch occupies residues 1 to 25 (MITKPDKNKVRQKRHRRVRGKLSGT). The span at 10–20 (VRQKRHRRVRG) shows a compositional bias: basic residues.

The protein belongs to the universal ribosomal protein uL18 family. As to quaternary structure, part of the 50S ribosomal subunit; part of the 5S rRNA/L5/L18/L25 subcomplex. Contacts the 5S and 23S rRNAs.

This is one of the proteins that bind and probably mediate the attachment of the 5S RNA into the large ribosomal subunit, where it forms part of the central protuberance. The protein is Large ribosomal subunit protein uL18 of Streptococcus gordonii (strain Challis / ATCC 35105 / BCRC 15272 / CH1 / DL1 / V288).